Consider the following 576-residue polypeptide: Proline--tRNA ligase (576 aa).

Belongs to the class-II aminoacyl-tRNA synthetase family. ProS type 1 subfamily. As to quaternary structure, homodimer.

The protein localises to the cytoplasm. The enzyme catalyses tRNA(Pro) + L-proline + ATP = L-prolyl-tRNA(Pro) + AMP + diphosphate. Functionally, catalyzes the attachment of proline to tRNA(Pro) in a two-step reaction: proline is first activated by ATP to form Pro-AMP and then transferred to the acceptor end of tRNA(Pro). As ProRS can inadvertently accommodate and process non-cognate amino acids such as alanine and cysteine, to avoid such errors it has two additional distinct editing activities against alanine. One activity is designated as 'pretransfer' editing and involves the tRNA(Pro)-independent hydrolysis of activated Ala-AMP. The other activity is designated 'posttransfer' editing and involves deacylation of mischarged Ala-tRNA(Pro). The misacylated Cys-tRNA(Pro) is not edited by ProRS. This is Proline--tRNA ligase from Magnetococcus marinus (strain ATCC BAA-1437 / JCM 17883 / MC-1).